The following is a 382-amino-acid chain: MGPIGAEADENQTVEEMKMEPSGPGHTTPRGELAPDSEPELKDSTKLIEVQIILILAYCSIILLGVVGNSLVIHVVIKFKSMRTVTNFFIANLAVADLLVNTLCLPFTLTYTLMGEWKMGPVLCHLVPYAQGLAVQVSTITLTVIALDRHRCIVYHLESKISKRISFLIIGLAWGISALLASPLAIFREYSLIEIIPDFEIVACTEKWPGEEKSIYGTVYSLSSLLILYVLPLGIISFSYARIWSKLKNHVSPGGVNDHYHQRRQKTTKMLVCVVVVFAVSWLPLHAFQLAVDIDSQVLDLKEYKLIFTVFHIIAMCSTFANPLLYGWMNSNYRKAFLSAFRCEQRLDAIHSEVSMTSKAKKNLEATKNGGPDDSFTEATNV.

A disordered region spans residues 1–39 (MGPIGAEADENQTVEEMKMEPSGPGHTTPRGELAPDSEP). Topologically, residues 1 to 46 (MGPIGAEADENQTVEEMKMEPSGPGHTTPRGELAPDSEPELKDSTK) are extracellular. Asn11 is a glycosylation site (N-linked (GlcNAc...) asparagine). A helical transmembrane segment spans residues 47–67 (LIEVQIILILAYCSIILLGVV). At 68-87 (GNSLVIHVVIKFKSMRTVTN) the chain is on the cytoplasmic side. Residues 88–108 (FFIANLAVADLLVNTLCLPFT) traverse the membrane as a helical segment. Topologically, residues 109–125 (LTYTLMGEWKMGPVLCH) are extracellular. Cys124 and Cys204 are joined by a disulfide. The chain crosses the membrane as a helical span at residues 126–146 (LVPYAQGLAVQVSTITLTVIA). The Cytoplasmic portion of the chain corresponds to 147 to 166 (LDRHRCIVYHLESKISKRIS). The chain crosses the membrane as a helical span at residues 167–187 (FLIIGLAWGISALLASPLAIF). Residues 188–217 (REYSLIEIIPDFEIVACTEKWPGEEKSIYG) are Extracellular-facing. Residues 218–238 (TVYSLSSLLILYVLPLGIISF) traverse the membrane as a helical segment. Topologically, residues 239–269 (SYARIWSKLKNHVSPGGVNDHYHQRRQKTTK) are cytoplasmic. Residues 270 to 290 (MLVCVVVVFAVSWLPLHAFQL) form a helical membrane-spanning segment. The Extracellular portion of the chain corresponds to 291 to 305 (AVDIDSQVLDLKEYK). The chain crosses the membrane as a helical span at residues 306–326 (LIFTVFHIIAMCSTFANPLLY). Residues 327–382 (GWMNSNYRKAFLSAFRCEQRLDAIHSEVSMTSKAKKNLEATKNGGPDDSFTEATNV) are Cytoplasmic-facing. Cys343 carries S-palmitoyl cysteine lipidation. Positions 363–382 (NLEATKNGGPDDSFTEATNV) are disordered.

Belongs to the G-protein coupled receptor 1 family.

The protein localises to the cell membrane. In terms of biological role, receptor for neuropeptide Y and peptide YY. This Sus scrofa (Pig) protein is Neuropeptide Y receptor type 2 (NPY2R).